The primary structure comprises 646 residues: Lipoteichoic acid synthase (646 aa).

Over 1 to 7 the chain is Cytoplasmic; it reads MKLHKKK. A helical membrane pass occupies residues 8–28; that stretch reads LTLFAFFILTVLTVTLKTYFS. Residues 29 to 43 are Extracellular-facing; that stretch reads YYVDFSLGVKGLVQN. A helical membrane pass occupies residues 44 to 64; it reads LILLMNPYSLIALVLSIFLFF. Over 65 to 68 the chain is Cytoplasmic; sequence KGKK. The chain crosses the membrane as a helical span at residues 69–89; that stretch reads AFWFIFIGGFILTFLLYANVV. Residues 90-119 lie on the Extracellular side of the membrane; it reads YFRFFSDFLTFSTLNQAGNVESMGGAVTAS. The chain crosses the membrane as a helical span at residues 120-140; sequence FKWYDFVYFIDTIIYLFVLIF. Topologically, residues 141–153 are cytoplasmic; that stretch reads KQKWLDKRVFSKK. The chain crosses the membrane as a helical span at residues 154–174; that stretch reads FVPVVMAASIALFFLNLAFAE. Residues 175–646 are Extracellular-facing; it reads SDRPELLTRT…KTGPKGQERK (472 aa). Mn(2+) contacts are provided by E255 and T300. T300 is a catalytic residue. H416 is a substrate binding site. Mn(2+)-binding residues include D475 and H476. The interval 579 to 646 is disordered; that stretch reads IYDNKNNEPM…KTGPKGQERK (68 aa). 2 stretches are compositionally biased toward basic and acidic residues: residues 580 to 607 and 625 to 646; these read YDNK…KDLQ and DFDK…QERK.

It belongs to the LTA synthase family. In terms of processing, proteolytically cleaved.

It localises to the cell membrane. Its subcellular location is the secreted. Its pathway is cell wall biogenesis; lipoteichoic acid biosynthesis. Catalyzes the polymerization of lipoteichoic acid (LTA) polyglycerol phosphate, a reaction that presumably uses phosphatidylglycerol (PG) as substrate. Is required for staphylococcal growth and cell division process. This Staphylococcus saprophyticus subsp. saprophyticus (strain ATCC 15305 / DSM 20229 / NCIMB 8711 / NCTC 7292 / S-41) protein is Lipoteichoic acid synthase (ltaS).